Reading from the N-terminus, the 378-residue chain is MSTPHIVVGVSGGVDSSVAAWKLAQQGEPIAGLFMQNWADDGSGDCRAEDDRRDAVAVCGVLGMPFHFRDFSGEYWSGVFEHFLAEYAAGRTPNPDVLCNREVKFKHFLDAAQALGAERIATGHYAQVAHRGRRWRLLRGADRDKDQSYFLHQLGQSQLAATLFPIGDLEKSTLRRIARDAGLPTHAKKDSTGICFIGERDFREFLGRYLPARTGEIRDPQGQRIAEHPGVFYFTLGQREGLNIGGVRGRAAAPWYVVGKDVASNVLYVDQDRDSPLLQSRWLQSEQAHWVTGAPPARRFSCTAQTRYRQPDEPCTVDVQDDGSVQVHFERPQRAVTPGQSLVLYDGKECLGGAVIAATDAPLERQLAGSSFSSEVVA.

ATP-binding positions include 9–16 (GVSGGVDS) and methionine 35. The interval 94-96 (NPD) is interaction with target base in tRNA. The Nucleophile role is filled by cysteine 99. Residues cysteine 99 and cysteine 195 are joined by a disulfide bond. Glycine 123 contributes to the ATP binding site. Residues 145–147 (KDQ) are interaction with tRNA. Cysteine 195 serves as the catalytic Cysteine persulfide intermediate. Residues 307 to 308 (RY) form an interaction with tRNA region.

The protein belongs to the MnmA/TRMU family.

The protein resides in the cytoplasm. The catalysed reaction is S-sulfanyl-L-cysteinyl-[protein] + uridine(34) in tRNA + AH2 + ATP = 2-thiouridine(34) in tRNA + L-cysteinyl-[protein] + A + AMP + diphosphate + H(+). Its function is as follows. Catalyzes the 2-thiolation of uridine at the wobble position (U34) of tRNA, leading to the formation of s(2)U34. This Xanthomonas oryzae pv. oryzae (strain MAFF 311018) protein is tRNA-specific 2-thiouridylase MnmA.